We begin with the raw amino-acid sequence, 215 residues long: Nucleoredoxin-like protein 1 (215 aa).

A Thioredoxin; atypical domain is found at 1-165 (MADLFLDKIL…VSEIIDRSFL (165 aa)). A compositionally biased stretch (basic and acidic residues) spans 185–194 (IKYKDETTNE). The interval 185–215 (IKYKDETTNEKKKRKHCDDEDEGGGGGTEFF) is disordered.

This sequence belongs to the nucleoredoxin family.

It localises to the cell projection. The protein resides in the cilium. It is found in the photoreceptor outer segment. Its function is as follows. Plays an important role in retinal cone photoreceptor survival. May play a role in cone cell viability, slowing down cone degeneration, does not seem to play a role in degenerating rods. The polypeptide is Nucleoredoxin-like protein 1 (nxnl1) (Xenopus laevis (African clawed frog)).